Consider the following 239-residue polypeptide: Probable transcriptional regulatory protein CD630_07950 (239 aa).

Belongs to the TACO1 family.

The protein localises to the cytoplasm. The chain is Probable transcriptional regulatory protein CD630_07950 from Clostridioides difficile (strain 630) (Peptoclostridium difficile).